We begin with the raw amino-acid sequence, 583 residues long: Aspartate--tRNA ligase (583 aa).

Glutamate 174 lines the L-aspartate pocket. The tract at residues 198 to 201 (QITK) is aspartate. Arginine 220 lines the L-aspartate pocket. Residues 220 to 222 (RDE) and glutamine 229 contribute to the ATP site. Histidine 443 contributes to the L-aspartate binding site. An ATP-binding site is contributed by glutamate 477. An L-aspartate-binding site is contributed by arginine 484. Residue 529-532 (GLDR) coordinates ATP.

This sequence belongs to the class-II aminoacyl-tRNA synthetase family. Type 1 subfamily. Homodimer.

Its subcellular location is the cytoplasm. It catalyses the reaction tRNA(Asp) + L-aspartate + ATP = L-aspartyl-tRNA(Asp) + AMP + diphosphate. Functionally, catalyzes the attachment of L-aspartate to tRNA(Asp) in a two-step reaction: L-aspartate is first activated by ATP to form Asp-AMP and then transferred to the acceptor end of tRNA(Asp). This is Aspartate--tRNA ligase from Streptococcus agalactiae serotype III (strain NEM316).